We begin with the raw amino-acid sequence, 507 residues long: MGLPWYRVHTVVLNDPGRLISVHLMHTALVAGWAGSMALYELAIFDSSDAVLNPMWRQGMFVLPFMARLGVTSSWNGWSVTGETGLDPGFWSFEGVAAAHIVLSGLLFLAAVWHWVFWDLELFVDPRTGESALDLPKMFGIHLFLSGLLCFGFGAFHLTGVWGPGMWVSDPYGLTGHVQPVAPEWGPAGFNPFNPGGVVAHHIAAGIVGIIAGLFHLTVRPPERLYKALRMGNIETVLSSSIAAVFFAAFVVAGTMWYGNATTPIELFGPTRYQWDKGYFQEEIQRRVDSQLAEGASLSEAWSTIPEKLAFYDYVGNSPAKGGLFRTGAMNSGDGIAQEWIGHPIFKDKEGRELEVRRMPNFFETFPVIMTDADGVVRADIPFRRSESKFSVEQTGVTVSFYGGALDGQTFSNPSDVKKFARKAQLGEGFDFDTETFNSDGVFRTSPRGWFTFGHAVFALLFFFGHIWHGSRTLFRDVFAGVDPGLEEQVEFGVFAKVGDLSTRKEA.

Residues 2-16 (GLPWYRVHTVVLNDP) are Cytoplasmic-facing. The chain crosses the membrane as a helical span at residues 17–39 (GRLISVHLMHTALVAGWAGSMAL). Residues 40-94 (YELAIFDSSDAVLNPMWRQGMFVLPFMARLGVTSSWNGWSVTGETGLDPGFWSFE) are Lumenal, thylakoid-facing. A helical transmembrane segment spans residues 95–116 (GVAAAHIVLSGLLFLAAVWHWV). The Cytoplasmic portion of the chain corresponds to 117-134 (FWDLELFVDPRTGESALD). The helical transmembrane segment at 135–159 (LPKMFGIHLFLSGLLCFGFGAFHLT) threads the bilayer. Residues 160-196 (GVWGPGMWVSDPYGLTGHVQPVAPEWGPAGFNPFNPG) lie on the Lumenal, thylakoid side of the membrane. A helical membrane pass occupies residues 197-218 (GVVAHHIAAGIVGIIAGLFHLT). At 219-233 (VRPPERLYKALRMGN) the chain is on the cytoplasmic side. A helical membrane pass occupies residues 234 to 255 (IETVLSSSIAAVFFAAFVVAGT). Over 256–450 (MWYGNATTPI…GVFRTSPRGW (195 aa)) the chain is Lumenal, thylakoid. The chain crosses the membrane as a helical span at residues 451–474 (FTFGHAVFALLFFFGHIWHGSRTL). Over 475–507 (FRDVFAGVDPGLEEQVEFGVFAKVGDLSTRKEA) the chain is Cytoplasmic.

The protein belongs to the PsbB/PsbC family. PsbB subfamily. PSII is composed of 1 copy each of membrane proteins PsbA, PsbB, PsbC, PsbD, PsbE, PsbF, PsbH, PsbI, PsbJ, PsbK, PsbL, PsbM, PsbT, PsbX, Psb30/Ycf12, peripheral proteins PsbO, CyanoQ (PsbQ), PsbU, PsbV and a large number of cofactors. It forms dimeric complexes. Contacts PsbQ. Binds multiple chlorophylls. PSII binds additional chlorophylls, carotenoids and specific lipids. is required as a cofactor.

It localises to the cellular thylakoid membrane. Its function is as follows. One of the components of the core complex of photosystem II (PSII). It binds chlorophyll and helps catalyze the primary light-induced photochemical processes of PSII. PSII is a light-driven water:plastoquinone oxidoreductase, using light energy to abstract electrons from H(2)O, generating O(2) and a proton gradient subsequently used for ATP formation. This chain is Photosystem II CP47 reaction center protein, found in Synechocystis sp. (strain ATCC 27184 / PCC 6803 / Kazusa).